Reading from the N-terminus, the 79-residue chain is Metallothionein-like protein type 2 (79 aa).

It belongs to the metallothionein superfamily. Type 15 family.

Functionally, metallothioneins have a high content of cysteine residues that bind various heavy metals. The protein is Metallothionein-like protein type 2 (MT1) of Malus domestica (Apple).